A 383-amino-acid chain; its full sequence is Retrovirus-related Pol polyprotein from type-1 retrotransposable element R1 3 (383 aa).

Positions 1-88 (VDAFADDLLL…DRVRYLGVNV (88 aa)) constitute a Reverse transcriptase domain. The tract at residues 229–383 (LSLHECRELV…VQRMRENEES (155 aa)) is nucleic acid-binding endonuclease.

The catalysed reaction is DNA(n) + a 2'-deoxyribonucleoside 5'-triphosphate = DNA(n+1) + diphosphate. The protein is Retrovirus-related Pol polyprotein from type-1 retrotransposable element R1 3 of Nasonia vitripennis (Parasitic wasp).